The primary structure comprises 313 residues: Carbamate kinase 2 (313 aa).

The protein belongs to the carbamate kinase family.

The protein resides in the cytoplasm. It catalyses the reaction hydrogencarbonate + NH4(+) + ATP = carbamoyl phosphate + ADP + H2O + H(+). Its pathway is metabolic intermediate metabolism; carbamoyl phosphate degradation; CO(2) and NH(3) from carbamoyl phosphate: step 1/1. In Staphylococcus aureus (strain USA300), this protein is Carbamate kinase 2 (arcC2).